The sequence spans 691 residues: Elongation factor G (691 aa).

Positions glutamate 8–valine 282 constitute a tr-type G domain. GTP contacts are provided by residues alanine 17–threonine 24, aspartate 81–histidine 85, and asparagine 135–aspartate 138.

It belongs to the TRAFAC class translation factor GTPase superfamily. Classic translation factor GTPase family. EF-G/EF-2 subfamily.

The protein localises to the cytoplasm. In terms of biological role, catalyzes the GTP-dependent ribosomal translocation step during translation elongation. During this step, the ribosome changes from the pre-translocational (PRE) to the post-translocational (POST) state as the newly formed A-site-bound peptidyl-tRNA and P-site-bound deacylated tRNA move to the P and E sites, respectively. Catalyzes the coordinated movement of the two tRNA molecules, the mRNA and conformational changes in the ribosome. This chain is Elongation factor G, found in Prochlorococcus marinus (strain NATL1A).